The chain runs to 330 residues: tRNA U34 carboxymethyltransferase (330 aa).

Carboxy-S-adenosyl-L-methionine contacts are provided by residues Lys91, Trp105, Lys110, Gly130, 152–154 (DPS), 181–182 (IE), Met196, Tyr200, and Arg315.

This sequence belongs to the class I-like SAM-binding methyltransferase superfamily. CmoB family. As to quaternary structure, homotetramer.

The enzyme catalyses carboxy-S-adenosyl-L-methionine + 5-hydroxyuridine(34) in tRNA = 5-carboxymethoxyuridine(34) in tRNA + S-adenosyl-L-homocysteine + H(+). Its function is as follows. Catalyzes carboxymethyl transfer from carboxy-S-adenosyl-L-methionine (Cx-SAM) to 5-hydroxyuridine (ho5U) to form 5-carboxymethoxyuridine (cmo5U) at position 34 in tRNAs. The polypeptide is tRNA U34 carboxymethyltransferase (Shewanella amazonensis (strain ATCC BAA-1098 / SB2B)).